A 218-amino-acid polypeptide reads, in one-letter code: 1-Cys peroxiredoxin (218 aa).

A Thioredoxin domain is found at 4–164; that stretch reads LTIGDTIPDL…VLRVVESLQK (161 aa). Cys-46 (cysteine sulfenic acid (-SOH) intermediate) is an active-site residue. The Bipartite nuclear localization signal motif lies at 194–217; it reads KEMFPQGFKTADLPSKKEYLRFTN.

It belongs to the peroxiredoxin family. Prx6 subfamily.

The protein resides in the nucleus. Its subcellular location is the cytoplasm. It catalyses the reaction a hydroperoxide + [thioredoxin]-dithiol = an alcohol + [thioredoxin]-disulfide + H2O. Its function is as follows. Thiol-specific peroxidase that catalyzes the reduction of hydrogen peroxide and organic hydroperoxides to water and alcohols, respectively. Seems to contribute to the inhibition of germination during stress. In Medicago truncatula (Barrel medic), this protein is 1-Cys peroxiredoxin.